The chain runs to 569 residues: Phosphatase and actin regulator 2 (569 aa).

Over residues 1–13 the composition is skewed to polar residues; it reads MGQTSVSALSPQP. The segment at 1 to 47 is disordered; the sequence is MGQTSVSALSPQPGSVDGLDKASIANSDGPPAGSQTPPFKRKGKLST. Phosphoserine is present on Ser27. A Phosphothreonine modification is found at Thr36. The stretch at 71-96 is one RPEL 1 repeat; that stretch reads AVLERKISTRQSREELIRRGLLKELP. Disordered regions lie at residues 98–253 and 295–483; these read QDGD…TGKP and PTLP…QEAK. The segment covering 140–151 has biased composition (basic and acidic residues); that stretch reads GPPREEQAEEKT. Over residues 162 to 176 the composition is skewed to low complexity; that stretch reads GSKASSSPSASSTSS. Polar residues predominate over residues 212 to 224; it reads LSPNTVTSETSSL. A Phosphoserine modification is found at Ser357. The span at 386 to 399 shows a compositional bias: acidic residues; it reads TDDDDEEDDDDDST. 3 RPEL repeats span residues 412 to 437, 450 to 475, and 488 to 513; these read DTLA…QRTS, TKLV…KQKN, and RRLS…RFNE. Residues 423–444 are compositionally biased toward basic and acidic residues; that stretch reads SKKELEDKNILQRTSEEERQEL. At Ser457 the chain carries Phosphoserine. Residues 461 to 483 are compositionally biased toward basic and acidic residues; that stretch reads TTEELEQRSILKQKNEEEEQEAK. Residue Ser495 is modified to Phosphoserine.

Belongs to the phosphatase and actin regulator family. In terms of assembly, binds PPP1CA and actin. In terms of tissue distribution, expressed in the brain with high levels in the cerebellum, specifically in the Purkinje cell layer, choroid plexus and thalamus (ventral, rhomboid and anterior nuclei). Moderate to high expression in the hippocampus, piriform cortex, olfactory bulb, entorhinal cortex, as well as in geniculate bodies, lamboid septal zone, preoptic area and ventral pallidum (at protein level).

The sequence is that of Phosphatase and actin regulator 2 (Phactr2) from Rattus norvegicus (Rat).